Reading from the N-terminus, the 270-residue chain is Protoheme IX farnesyltransferase (270 aa).

A run of 7 helical transmembrane segments spans residues L13–D30, H33–L53, L95–W115, L129–A149, Y156–F176, L207–P227, and E249–L269.

It belongs to the UbiA prenyltransferase family. Protoheme IX farnesyltransferase subfamily.

The protein localises to the cell inner membrane. It carries out the reaction heme b + (2E,6E)-farnesyl diphosphate + H2O = Fe(II)-heme o + diphosphate. It functions in the pathway porphyrin-containing compound metabolism; heme O biosynthesis; heme O from protoheme: step 1/1. Functionally, converts heme B (protoheme IX) to heme O by substitution of the vinyl group on carbon 2 of heme B porphyrin ring with a hydroxyethyl farnesyl side group. This Geobacter sulfurreducens (strain ATCC 51573 / DSM 12127 / PCA) protein is Protoheme IX farnesyltransferase.